The sequence spans 146 residues: Endothelial differentiation-related factor 1 homolog (146 aa).

A disordered region spans residues R13–V53. Residues S17 to Q31 are compositionally biased toward low complexity. A compositionally biased stretch (basic and acidic residues) spans R32–K41. The region spanning I80–K134 is the HTH cro/C1-type domain. Positions Q91–C110 form a DNA-binding region, H-T-H motif.

It localises to the nucleus. Functionally, probable transcriptional coactivator. In Danio rerio (Zebrafish), this protein is Endothelial differentiation-related factor 1 homolog (edf1).